A 470-amino-acid chain; its full sequence is Crh-like protein UTR2 (470 aa).

An N-terminal signal peptide occupies residues 1 to 23; the sequence is MRFSTLHFAFLATLSSIFTVVAA. Cysteines 58 and 69 form a disulfide. Residues N65, N100, and N125 are each glycosylated (N-linked (GlcNAc...) asparagine). In terms of domain architecture, GH16 spans 95–282; sequence SDYLGNSTEA…WAGGLINWDS (188 aa). The Nucleophile role is filled by E168. The active-site Proton donor is the E172. E172 is a binding site for chitin. 6 N-linked (GlcNAc...) asparagine glycosylation sites follow: N177, N194, N198, N202, N235, and N239. The chitin site is built by W259 and T270. 2 N-linked (GlcNAc...) asparagine glycosylation sites follow: N314 and N327. Residues 347–446 form a disordered region; it reads SDDATGFDPQ…SSGSSSQGVA (100 aa). 2 stretches are compositionally biased toward low complexity: residues 370-384 and 392-408; these read TTIT…ITSV and TANV…QATA. Polar residues predominate over residues 409-418; the sequence is KSSTGTNTYD. Residues 433–446 show a composition bias toward low complexity; it reads TDSGSSGSSSQGVA. The GPI-anchor amidated serine moiety is linked to residue S440. Positions 441–470 are cleaved as a propeptide — removed in mature form; it reads SSQGVANSLNESVISGIFASICLGILSFFM. N450 is a glycosylation site (N-linked (GlcNAc...) asparagine).

This sequence belongs to the glycosyl hydrolase 16 family. CRH1 subfamily. In terms of processing, the GPI-anchor is attached to the protein in the endoplasmic reticulum and serves to target the protein to the cell surface. There, the glucosamine-inositol phospholipid moiety is cleaved off and the GPI-modified mannoprotein is covalently attached via its lipidless GPI glycan remnant to the 1,6-beta-glucan of the outer cell wall layer.

It localises to the secreted. The protein localises to the cell wall. It is found in the membrane. It catalyses the reaction Random endo-hydrolysis of N-acetyl-beta-D-glucosaminide (1-&gt;4)-beta-linkages in chitin and chitodextrins.. Its function is as follows. Dual chitinase/transglycosylase that plays a role in cell wall architecture. Chitinase and transglycosylase activities are coupled. Required for the polysaccharide cross-linking at the septa and the cell wall. More specifically, transfers chitin to 1,6-beta-glucan in the cell wall. Plays an important role in fungal pathogenesis via its functions in cell wall assembly and regeneration, filamentation, and adherence to host cells. Acts as a cell surface antigen in acute candidemia patients. The protein is Crh-like protein UTR2 of Candida albicans (strain SC5314 / ATCC MYA-2876) (Yeast).